The following is a 339-amino-acid chain: Putative ABC transporter ATP-binding protein MG467 homolog (339 aa).

Positions 41 to 87 are disordered; sequence KKTKKAKPAKVKKVKEPKAKAVKPEQVKPTKTTKAPKPKKPKKQGGL. Over residues 42 to 53 the composition is skewed to basic residues; it reads KTKKAKPAKVKK. Residues 54 to 68 show a composition bias toward basic and acidic residues; the sequence is VKEPKAKAVKPEQVK. The span at 74–83 shows a compositional bias: basic residues; the sequence is KAPKPKKPKK. The 227-residue stretch at 112-338 folds into the ABC transporter domain; it reads ISIDKMWKHV…IVSNELVRPL (227 aa). 150–157 lines the ATP pocket; that stretch reads GPSGSGKT.

Belongs to the ABC transporter superfamily.

The sequence is that of Putative ABC transporter ATP-binding protein MG467 homolog from Mycoplasma pneumoniae (strain ATCC 29342 / M129 / Subtype 1) (Mycoplasmoides pneumoniae).